Consider the following 842-residue polypeptide: Probable receptor-like protein kinase At5g61350 (842 aa).

The signal sequence occupies residues 1 to 27 (MGGDFRHFSSHVSLLLLFLLIVKSSSS). Topologically, residues 28-425 (FTPADNYLID…IGGMSSKKLA (398 aa)) are extracellular. Residues asparagine 81, asparagine 125, asparagine 252, asparagine 294, asparagine 359, and asparagine 365 are each glycosylated (N-linked (GlcNAc...) asparagine). Residues 426–446 (IAGIGFVMALTAFLGVVVLLV) traverse the membrane as a helical segment. At 447-842 (RWQRRPKDWQ…EMQSPSHSIP (396 aa)) the chain is on the cytoplasmic side. The 279-residue stretch at 525–803 (FDENAVCGVG…GDVLWNLEYA (279 aa)) folds into the Protein kinase domain. Residues 531 to 539 (CGVGGFGKV) and lysine 553 each bind ATP. The active-site Proton acceptor is the aspartate 655.

It belongs to the protein kinase superfamily. Ser/Thr protein kinase family.

Its subcellular location is the membrane. This chain is Probable receptor-like protein kinase At5g61350, found in Arabidopsis thaliana (Mouse-ear cress).